The following is a 208-amino-acid chain: Protein-L-isoaspartate O-methyltransferase (208 aa).

Residue Ser59 is part of the active site.

The protein belongs to the methyltransferase superfamily. L-isoaspartyl/D-aspartyl protein methyltransferase family.

The protein localises to the cytoplasm. The enzyme catalyses [protein]-L-isoaspartate + S-adenosyl-L-methionine = [protein]-L-isoaspartate alpha-methyl ester + S-adenosyl-L-homocysteine. Its function is as follows. Catalyzes the methyl esterification of L-isoaspartyl residues in peptides and proteins that result from spontaneous decomposition of normal L-aspartyl and L-asparaginyl residues. It plays a role in the repair and/or degradation of damaged proteins. This Escherichia coli (strain K12 / MC4100 / BW2952) protein is Protein-L-isoaspartate O-methyltransferase.